We begin with the raw amino-acid sequence, 698 residues long: MSEQLPLLIELGTEELPVKALPGLAQAFFDGVLAGLEKRGVAVTRGDAKPLSTPRRLAVLLPGVATEQPEQRSEVLGPYLNIALDAEGKPTRALAGFAAKAGIDWTALERTSDAKGERFVHRAVTPGAQAAALLPEILREAIAAMPIPKPMRWGAHEYAFARPVQWLVLLFGDTVIPAELLGVRGDRITRGHRFMHDGDIALAAPGDYIDALRAAHVLVDADARRARIVEEVDAAARQAGGSARISDDNLEQVVNLVEWPSAVLCSFERAFLAVPQEALIETMEINQKFFPVLDDGGKLTEQFIGIANIVSKDVAEVAKGYERVIRPRFADAKFFFDEDLKQGLEAMGAGLASVTYQAKLGTVADKVARVAALAEAIAPQVGADPVQARRAAELAKNDLQSRMVNEFPELQGIAGRHYAKAAGEPSEISLAIDEAYQPRFAGDDIALSPLGKVLAIAERLDTLAGGFAAGLKPTGNKDPFALRRNALGLARTVIESGFDLDLPKLIDVGLASLPDAVKPHADRNTETVRADLYDFILDRLKGYYADKGVAATHFNAVAELKPASLYDFDRRIDAIGIFATLPEAEALAAANKRIRNILRKVEGEIPGDIDTTLLREPAEEALAEAVEAAIGDTGDALHRHDYVAVLARLARLRPQVDAFFDGVMVNADDPQLRANRLALLKKLGDRLGSVAAIEHLSS.

This sequence belongs to the class-II aminoacyl-tRNA synthetase family. Tetramer of two alpha and two beta subunits.

The protein localises to the cytoplasm. The enzyme catalyses tRNA(Gly) + glycine + ATP = glycyl-tRNA(Gly) + AMP + diphosphate. In Xanthomonas campestris pv. campestris (strain 8004), this protein is Glycine--tRNA ligase beta subunit.